We begin with the raw amino-acid sequence, 349 residues long: MSKIRVLSVDDSALMRQIMTEIINSHSDMEMVATAPDPLVARDLIKKFNPDVLTLDVEMPRMDGLDFLEKLMRLRPMPVVMVSSLTGKGSEVTLRALELGAIDFVTKPQLGIREGMLAYSEMIAEKVRTAAKASLAAHKPLSAPTTLKAGPLLSSEKLIAIGASTGGTEAIRHVLQPLPLSSPALLITQHMPPGFTRSFADRLNKLCQIGVKEAEDGERVLPGHAYIAPGDRHMELARSGANYQIKIHDGPAVNRHRPSVDVLFHSVAKQAGRNAVGVILTGMGNDGAAGMLAMRQAGAWTLAQNEASCVVFGMPREAINMGGVCEVVDLSQVSQQMLATISAGQAIRI.

The Response regulatory domain maps to 5 to 122 (RVLSVDDSAL…REGMLAYSEM (118 aa)). Residue Asp-56 is modified to 4-aspartylphosphate. A CheB-type methylesterase domain is found at 152–344 (LLSSEKLIAI…QQMLATISAG (193 aa)). Active-site residues include Ser-164, His-190, and Asp-286.

It belongs to the CheB family. Post-translationally, phosphorylated by CheA. Phosphorylation of the N-terminal regulatory domain activates the methylesterase activity.

It is found in the cytoplasm. The enzyme catalyses [protein]-L-glutamate 5-O-methyl ester + H2O = L-glutamyl-[protein] + methanol + H(+). The catalysed reaction is L-glutaminyl-[protein] + H2O = L-glutamyl-[protein] + NH4(+). In terms of biological role, involved in chemotaxis. Part of a chemotaxis signal transduction system that modulates chemotaxis in response to various stimuli. Catalyzes the demethylation of specific methylglutamate residues introduced into the chemoreceptors (methyl-accepting chemotaxis proteins or MCP) by CheR. Also mediates the irreversible deamidation of specific glutamine residues to glutamic acid. The polypeptide is Protein-glutamate methylesterase/protein-glutamine glutaminase (Shigella flexneri).